The chain runs to 149 residues: MKLTDYVKQVSLEDFGRPFIHHVQWNRRLRSTGGRFFPKDGHLDFNPKVYQELGLDVFRKIVRHELCHYHLYFQGKGYQHKDRDFKELLKAVDGLRFVPSLPNSNSKPIKLYRCQSCQQRYQRKRRIDTQRYRCGLCRGKLLLVNQPED.

In terms of domain architecture, SprT-like spans 4-144 (TDYVKQVSLE…GLCRGKLLLV (141 aa)). Histidine 64 is a binding site for Zn(2+). Glutamate 65 is a catalytic residue. A Zn(2+)-binding site is contributed by histidine 68.

Belongs to the SprT family. Zn(2+) serves as cofactor.

It is found in the cytoplasm. The chain is Protein SprT-like from Streptococcus pneumoniae serotype 4 (strain ATCC BAA-334 / TIGR4).